The chain runs to 458 residues: ATP synthase subunit beta (458 aa).

ATP is bound at residue Gly148–Thr155.

The protein belongs to the ATPase alpha/beta chains family. As to quaternary structure, F-type ATPases have 2 components, CF(1) - the catalytic core - and CF(0) - the membrane proton channel. CF(1) has five subunits: alpha(3), beta(3), gamma(1), delta(1), epsilon(1). CF(0) has three main subunits: a(1), b(2) and c(9-12). The alpha and beta chains form an alternating ring which encloses part of the gamma chain. CF(1) is attached to CF(0) by a central stalk formed by the gamma and epsilon chains, while a peripheral stalk is formed by the delta and b chains.

It is found in the cell inner membrane. It catalyses the reaction ATP + H2O + 4 H(+)(in) = ADP + phosphate + 5 H(+)(out). Produces ATP from ADP in the presence of a proton gradient across the membrane. The catalytic sites are hosted primarily by the beta subunits. The sequence is that of ATP synthase subunit beta from Shewanella loihica (strain ATCC BAA-1088 / PV-4).